The chain runs to 383 residues: Glycoprotein gp2 (383 aa).

Residues 1 to 25 (MGFIYARKLLLCMAVSIYAIGSTTT) form the signal peptide. Residues 24-75 (TTTETTTSSSSTSGSGQSTSSGTTNSSSSPTTSPPTTSSSPPTSTHTSSPST) are compositionally biased toward low complexity. The interval 24 to 136 (TTTETTTSSS…RNNSIEIVPQ (113 aa)) is disordered. The N-linked (GlcNAc...) asparagine; by host glycan is linked to asparagine 48. The span at 81-91 (HAGHHRGRAGG) shows a compositional bias: basic residues. The N-linked (GlcNAc...) asparagine; by host glycan is linked to asparagine 128. The chain crosses the membrane as a helical span at residues 354-371 (LVAATTLTVTILCLLCCL).

The protein resides in the virion membrane. The glycoprotein gp2 from the avirulent strain Kentucky A (KyA) is probably non functional since this strain harbors an in-frame deletion of 1,242 nucleotides in gene 71. This is Glycoprotein gp2 (US4) from Equus caballus (Horse).